A 571-amino-acid chain; its full sequence is Sulfite reductase [NADPH] hemoprotein beta-component (571 aa).

Cys-435, Cys-441, Cys-480, and Cys-484 together coordinate [4Fe-4S] cluster. Cys-484 is a binding site for siroheme.

Belongs to the nitrite and sulfite reductase 4Fe-4S domain family. In terms of assembly, alpha(8)-beta(8). The alpha component is a flavoprotein, the beta component is a hemoprotein. Siroheme is required as a cofactor. Requires [4Fe-4S] cluster as cofactor.

It catalyses the reaction hydrogen sulfide + 3 NADP(+) + 3 H2O = sulfite + 3 NADPH + 4 H(+). It functions in the pathway sulfur metabolism; hydrogen sulfide biosynthesis; hydrogen sulfide from sulfite (NADPH route): step 1/1. Functionally, component of the sulfite reductase complex that catalyzes the 6-electron reduction of sulfite to sulfide. This is one of several activities required for the biosynthesis of L-cysteine from sulfate. In Serratia proteamaculans (strain 568), this protein is Sulfite reductase [NADPH] hemoprotein beta-component.